Consider the following 352-residue polypeptide: Glutamine synthetase cytosolic isozyme (352 aa).

The 80-residue stretch at 19–98 (FIAEYIWIDA…VMCDTYTPAG (80 aa)) folds into the GS beta-grasp domain. In terms of domain architecture, GS catalytic spans 105 to 352 (KRCNAAKIFS…TSMIAETTIL (248 aa)).

This sequence belongs to the glutamine synthetase family. In terms of assembly, homooctamer.

The protein resides in the cytoplasm. It catalyses the reaction L-glutamate + NH4(+) + ATP = L-glutamine + ADP + phosphate + H(+). This Daucus carota (Wild carrot) protein is Glutamine synthetase cytosolic isozyme (GLN1).